Here is a 364-residue protein sequence, read N- to C-terminus: N-acetyl-gamma-glutamyl-phosphate reductase (364 aa).

The active site involves cysteine 157.

It belongs to the NAGSA dehydrogenase family. Type 1 subfamily.

The protein localises to the cytoplasm. It catalyses the reaction N-acetyl-L-glutamate 5-semialdehyde + phosphate + NADP(+) = N-acetyl-L-glutamyl 5-phosphate + NADPH + H(+). It participates in amino-acid biosynthesis; L-arginine biosynthesis; N(2)-acetyl-L-ornithine from L-glutamate: step 3/4. Its function is as follows. Catalyzes the NADPH-dependent reduction of N-acetyl-5-glutamyl phosphate to yield N-acetyl-L-glutamate 5-semialdehyde. In Bifidobacterium longum (strain DJO10A), this protein is N-acetyl-gamma-glutamyl-phosphate reductase.